Reading from the N-terminus, the 131-residue chain is ER membrane protein complex subunit 5 (131 aa).

Residues 1–3 (MAP) are Cytoplasmic-facing. The helical transmembrane segment at 4–22 (SLWKGLVGVGLFALAHAAF) threads the bilayer. At 23–43 (SAAQHRSYMRLTEKEDESLPI) the chain is on the lumenal side. The helical transmembrane segment at 44-63 (DIVLQTLLAFAVTCYGIVHI) threads the bilayer. Topologically, residues 64–131 (AGEFKDMDAT…KLRKFDSLRR (68 aa)) are cytoplasmic. Phosphoserine is present on S120.

The protein belongs to the membrane magnesium transporter (TC 1.A.67) family. In terms of assembly, component of the ER membrane protein complex (EMC). Abundant in heart muscle and kidney with lower levels in liver and brain and very little expression in intestine or colon. In kidney, highest levels in distal convoluted tubule.

Its subcellular location is the endoplasmic reticulum membrane. The protein resides in the golgi apparatus membrane. It is found in the early endosome membrane. Functionally, part of the endoplasmic reticulum membrane protein complex (EMC) that enables the energy-independent insertion into endoplasmic reticulum membranes of newly synthesized membrane proteins. Preferentially accommodates proteins with transmembrane domains that are weakly hydrophobic or contain destabilizing features such as charged and aromatic residues. Involved in the cotranslational insertion of multi-pass membrane proteins in which stop-transfer membrane-anchor sequences become ER membrane spanning helices. It is also required for the post-translational insertion of tail-anchored/TA proteins in endoplasmic reticulum membranes. By mediating the proper cotranslational insertion of N-terminal transmembrane domains in an N-exo topology, with translocated N-terminus in the lumen of the ER, controls the topology of multi-pass membrane proteins like the G protein-coupled receptors. By regulating the insertion of various proteins in membranes, it is indirectly involved in many cellular processes. May be involved Mg(2+) transport. In Mus musculus (Mouse), this protein is ER membrane protein complex subunit 5.